The chain runs to 807 residues: Glycerol-3-phosphate acyltransferase (807 aa).

An HXXXXD motif motif is present at residues 305-310 (CHRSHM).

It belongs to the GPAT/DAPAT family.

It is found in the cell inner membrane. It carries out the reaction sn-glycerol 3-phosphate + an acyl-CoA = a 1-acyl-sn-glycero-3-phosphate + CoA. Its pathway is phospholipid metabolism; CDP-diacylglycerol biosynthesis; CDP-diacylglycerol from sn-glycerol 3-phosphate: step 1/3. In Aliivibrio salmonicida (strain LFI1238) (Vibrio salmonicida (strain LFI1238)), this protein is Glycerol-3-phosphate acyltransferase.